The chain runs to 255 residues: Ribonuclease HII (255 aa).

The RNase H type-2 domain occupies 72 to 255 (AIICGIDEVG…KSFEPIKSLL (184 aa)). Residues Asp-78, Glu-79, and Asp-170 each contribute to the a divalent metal cation site.

It belongs to the RNase HII family. Mn(2+) is required as a cofactor. The cofactor is Mg(2+).

Its subcellular location is the cytoplasm. The enzyme catalyses Endonucleolytic cleavage to 5'-phosphomonoester.. Endonuclease that specifically degrades the RNA of RNA-DNA hybrids. This is Ribonuclease HII from Staphylococcus aureus (strain MRSA252).